The sequence spans 400 residues: DNA polymerase IV (400 aa).

A UmuC domain is found at 8–191 (ILLCDANSFF…LPVRELFGIG (184 aa)). Mg(2+)-binding residues include aspartate 12 and aspartate 109. Glutamate 110 is an active-site residue.

It belongs to the DNA polymerase type-Y family. As to quaternary structure, monomer. Requires Mg(2+) as cofactor.

The protein resides in the cytoplasm. It carries out the reaction DNA(n) + a 2'-deoxyribonucleoside 5'-triphosphate = DNA(n+1) + diphosphate. Poorly processive, error-prone DNA polymerase involved in untargeted mutagenesis. Copies undamaged DNA at stalled replication forks, which arise in vivo from mismatched or misaligned primer ends. These misaligned primers can be extended by PolIV. Exhibits no 3'-5' exonuclease (proofreading) activity. May be involved in translesional synthesis, in conjunction with the beta clamp from PolIII. This is DNA polymerase IV from Moorella thermoacetica (strain ATCC 39073 / JCM 9320).